A 275-amino-acid polypeptide reads, in one-letter code: DNA-directed RNA polymerase subunit Rpo3 (275 aa).

It belongs to the archaeal Rpo3/eukaryotic RPB3 RNA polymerase subunit family. As to quaternary structure, part of the RNA polymerase complex.

Its subcellular location is the cytoplasm. The enzyme catalyses RNA(n) + a ribonucleoside 5'-triphosphate = RNA(n+1) + diphosphate. Functionally, DNA-dependent RNA polymerase (RNAP) catalyzes the transcription of DNA into RNA using the four ribonucleoside triphosphates as substrates. The chain is DNA-directed RNA polymerase subunit Rpo3 from Methanopyrus kandleri (strain AV19 / DSM 6324 / JCM 9639 / NBRC 100938).